A 276-amino-acid polypeptide reads, in one-letter code: 3-methyl-2-oxobutanoate hydroxymethyltransferase (276 aa).

Positions 46 and 85 each coordinate Mg(2+). 3-methyl-2-oxobutanoate is bound by residues 46–47, aspartate 85, and lysine 115; that span reads DS. Residue glutamate 117 participates in Mg(2+) binding. Glutamate 184 serves as the catalytic Proton acceptor.

It belongs to the PanB family. Homodecamer; pentamer of dimers. It depends on Mg(2+) as a cofactor.

It is found in the cytoplasm. The catalysed reaction is 3-methyl-2-oxobutanoate + (6R)-5,10-methylene-5,6,7,8-tetrahydrofolate + H2O = 2-dehydropantoate + (6S)-5,6,7,8-tetrahydrofolate. Its pathway is cofactor biosynthesis; (R)-pantothenate biosynthesis; (R)-pantoate from 3-methyl-2-oxobutanoate: step 1/2. In terms of biological role, catalyzes the reversible reaction in which hydroxymethyl group from 5,10-methylenetetrahydrofolate is transferred onto alpha-ketoisovalerate to form ketopantoate. The polypeptide is 3-methyl-2-oxobutanoate hydroxymethyltransferase (Heliobacterium modesticaldum (strain ATCC 51547 / Ice1)).